A 466-amino-acid polypeptide reads, in one-letter code: Eukaryotic translation initiation factor 3 subunit M (466 aa).

Residues Glu-40–Gln-62 are disordered. The PCI domain maps to Ala-211–Tyr-378. The disordered stretch occupies residues Ala-424 to Glu-466. Positions Ser-433–Arg-443 are enriched in basic and acidic residues. Over residues Gln-451–Gln-460 the composition is skewed to low complexity.

The protein belongs to the eIF-3 subunit M family. Component of the eukaryotic translation initiation factor 3 (eIF-3) complex.

Its subcellular location is the cytoplasm. Functionally, component of the eukaryotic translation initiation factor 3 (eIF-3) complex, which is involved in protein synthesis of a specialized repertoire of mRNAs and, together with other initiation factors, stimulates binding of mRNA and methionyl-tRNAi to the 40S ribosome. The eIF-3 complex specifically targets and initiates translation of a subset of mRNAs involved in cell proliferation. The sequence is that of Eukaryotic translation initiation factor 3 subunit M from Aspergillus oryzae (strain ATCC 42149 / RIB 40) (Yellow koji mold).